Here is a 191-residue protein sequence, read N- to C-terminus: MSLKIEIIKDKILSDNYFVLRNITYDLTRKNGEVIRHKREVYDRGNGATILLYNREKQSVVLIRQFRVATWVNGNPDGRLIETCAGLLDNDAPEVCIRKEAIEETGFAVGEVKKLFELYMSPGGVTELVYFFIAEYTDAQRANAGGGVEDEDIDVLEIPFEQALEMIKTGEIQDGKALILLQYLQISGLMA.

Residues Tyr-17, 38–40 (KRE), Arg-67, and 85–87 (AGL) contribute to the GDP-alpha-D-mannose site. Positions 43-180 (DRGNGATILL…EIQDGKALIL (138 aa)) constitute a Nudix hydrolase domain. Residues Ala-85, Glu-100, and Glu-104 each coordinate Mg(2+). A Nudix box motif is present at residues 86–106 (GLLDNDAPEVCIRKEAIEETG). GDP-alpha-D-mannose-binding positions include Glu-104, Glu-127, 150 to 151 (DE), and Lys-176. Glu-151 is a Mg(2+) binding site.

It belongs to the Nudix hydrolase family. NudK subfamily. In terms of assembly, homodimer. Mg(2+) serves as cofactor.

It catalyses the reaction GDP-alpha-D-mannose + H2O = alpha-D-mannose 1-phosphate + GMP + 2 H(+). Its function is as follows. Nucleoside diphosphate sugar hydrolase that hydrolyzes GDP-mannose as its preferred substrate, yielding GMP and mannose-1-phosphate. This Enterobacter sp. (strain 638) protein is GDP-mannose pyrophosphatase (nudK).